We begin with the raw amino-acid sequence, 199 residues long: Holliday junction branch migration complex subunit RuvA (199 aa).

A domain I region spans residues 1–64 (MFAYIKGTVE…EDIAVLYGFG (64 aa)). Residues 65-143 (TVEELTMFEM…KEQLTSSIPM (79 aa)) are domain II. A flexible linker region spans residues 144-151 (TSPENNEV). The interval 152–199 (TGDSVLSEAVSALMVLGYGSAEASSTISGIYEKGISVEELVKKALKSL) is domain III.

This sequence belongs to the RuvA family. In terms of assembly, homotetramer. Forms an RuvA(8)-RuvB(12)-Holliday junction (HJ) complex. HJ DNA is sandwiched between 2 RuvA tetramers; dsDNA enters through RuvA and exits via RuvB. An RuvB hexamer assembles on each DNA strand where it exits the tetramer. Each RuvB hexamer is contacted by two RuvA subunits (via domain III) on 2 adjacent RuvB subunits; this complex drives branch migration. In the full resolvosome a probable DNA-RuvA(4)-RuvB(12)-RuvC(2) complex forms which resolves the HJ.

The protein resides in the cytoplasm. Functionally, the RuvA-RuvB-RuvC complex processes Holliday junction (HJ) DNA during genetic recombination and DNA repair, while the RuvA-RuvB complex plays an important role in the rescue of blocked DNA replication forks via replication fork reversal (RFR). RuvA specifically binds to HJ cruciform DNA, conferring on it an open structure. The RuvB hexamer acts as an ATP-dependent pump, pulling dsDNA into and through the RuvAB complex. HJ branch migration allows RuvC to scan DNA until it finds its consensus sequence, where it cleaves and resolves the cruciform DNA. The chain is Holliday junction branch migration complex subunit RuvA from Ruminiclostridium cellulolyticum (strain ATCC 35319 / DSM 5812 / JCM 6584 / H10) (Clostridium cellulolyticum).